The sequence spans 346 residues: Heat-inducible transcription repressor HrcA (346 aa).

This sequence belongs to the HrcA family.

Negative regulator of class I heat shock genes (grpE-dnaK-dnaJ and groELS operons). Prevents heat-shock induction of these operons. This Erythrobacter litoralis (strain HTCC2594) protein is Heat-inducible transcription repressor HrcA.